Reading from the N-terminus, the 62-residue chain is Large ribosomal subunit protein uL30 (62 aa).

The protein belongs to the universal ribosomal protein uL30 family. In terms of assembly, part of the 50S ribosomal subunit.

This is Large ribosomal subunit protein uL30 from Herpetosiphon aurantiacus (strain ATCC 23779 / DSM 785 / 114-95).